The primary structure comprises 249 residues: UPF0696 protein C11orf68 homolog (249 aa).

This sequence belongs to the UPF0696 family.

In Danio rerio (Zebrafish), this protein is UPF0696 protein C11orf68 homolog.